The sequence spans 189 residues: Holliday junction branch migration complex subunit RuvA (189 aa).

Residues 1–62 (MIVALKGNIE…EEAWSLYGFA (62 aa)) are domain I. A domain II region spans residues 63 to 138 (EEAEKRVFDT…FSLSLQEGSK (76 aa)). The interval 138–139 (KA) is flexible linker. The domain III stretch occupies residues 140–189 (STPPVFEESRLALESLGFKSELIAKALQNIQATTTQEIIKEALKKLQTLR).

The protein belongs to the RuvA family. As to quaternary structure, homotetramer. Forms an RuvA(8)-RuvB(12)-Holliday junction (HJ) complex. HJ DNA is sandwiched between 2 RuvA tetramers; dsDNA enters through RuvA and exits via RuvB. An RuvB hexamer assembles on each DNA strand where it exits the tetramer. Each RuvB hexamer is contacted by two RuvA subunits (via domain III) on 2 adjacent RuvB subunits; this complex drives branch migration. In the full resolvosome a probable DNA-RuvA(4)-RuvB(12)-RuvC(2) complex forms which resolves the HJ.

Its subcellular location is the cytoplasm. Its function is as follows. The RuvA-RuvB-RuvC complex processes Holliday junction (HJ) DNA during genetic recombination and DNA repair, while the RuvA-RuvB complex plays an important role in the rescue of blocked DNA replication forks via replication fork reversal (RFR). RuvA specifically binds to HJ cruciform DNA, conferring on it an open structure. The RuvB hexamer acts as an ATP-dependent pump, pulling dsDNA into and through the RuvAB complex. HJ branch migration allows RuvC to scan DNA until it finds its consensus sequence, where it cleaves and resolves the cruciform DNA. The chain is Holliday junction branch migration complex subunit RuvA from Wolinella succinogenes (strain ATCC 29543 / DSM 1740 / CCUG 13145 / JCM 31913 / LMG 7466 / NCTC 11488 / FDC 602W) (Vibrio succinogenes).